The chain runs to 131 residues: uncharacterized protein (131 aa).

An MSP domain is found at 14–130 (FLLIYSSLEV…RRLPASFLST (117 aa)).

This is an uncharacterized protein from Caenorhabditis elegans.